The chain runs to 695 residues: Ubiquitin carboxyl-terminal hydrolase 20 (695 aa).

2 disordered regions span residues 1-20 and 42-162; these read MLMA…SSIL and SLAL…SLFY. Composition is skewed to low complexity over residues 9–20 and 61–86; these read PSSILPRSSSIL and NHDS…SQSV. The span at 112-124 shows a compositional bias: acidic residues; the sequence is DDIDDDIWGDDDL. Residues 176–476 enclose the USP domain; sequence AGLWNLGNSC…DSYILFYARE (301 aa). Cysteine 185 serves as the catalytic Nucleophile. Histidine 435 (proton acceptor) is an active-site residue. Positions 556-571 are enriched in low complexity; that stretch reads SAESSSGEESPMGELL. Disordered regions lie at residues 556–585 and 674–695; these read SAES…PCTE and AREL…LKTT.

Belongs to the peptidase C19 family.

The catalysed reaction is Thiol-dependent hydrolysis of ester, thioester, amide, peptide and isopeptide bonds formed by the C-terminal Gly of ubiquitin (a 76-residue protein attached to proteins as an intracellular targeting signal).. Its function is as follows. Recognizes and hydrolyzes the peptide bond at the C-terminal Gly of ubiquitin. Involved in the processing of poly-ubiquitin precursors as well as that of ubiquitinated proteins. This is Ubiquitin carboxyl-terminal hydrolase 20 (UBP20) from Arabidopsis thaliana (Mouse-ear cress).